A 478-amino-acid polypeptide reads, in one-letter code: UDP-N-acetylmuramate--L-alanine ligase (478 aa).

122–128 (GTHGKTT) contacts ATP.

It belongs to the MurCDEF family.

The protein localises to the cytoplasm. It catalyses the reaction UDP-N-acetyl-alpha-D-muramate + L-alanine + ATP = UDP-N-acetyl-alpha-D-muramoyl-L-alanine + ADP + phosphate + H(+). Its pathway is cell wall biogenesis; peptidoglycan biosynthesis. Functionally, cell wall formation. The sequence is that of UDP-N-acetylmuramate--L-alanine ligase from Stenotrophomonas maltophilia (strain K279a).